An 845-amino-acid chain; its full sequence is Protein translocase subunit SecA (845 aa).

ATP contacts are provided by residues Gln88, Gly106 to Thr110, and Asp495. The interval Ser804–Lys838 is disordered. The span at Arg809 to Pro818 shows a compositional bias: basic residues. Residues Cys831, Cys833, Cys842, and Cys843 each contribute to the Zn(2+) site.

This sequence belongs to the SecA family. As to quaternary structure, monomer and homodimer. Part of the essential Sec protein translocation apparatus which comprises SecA, SecYEG and auxiliary proteins SecDF. Other proteins may also be involved. It depends on Zn(2+) as a cofactor.

Its subcellular location is the cell inner membrane. It localises to the cytoplasm. It carries out the reaction ATP + H2O + cellular proteinSide 1 = ADP + phosphate + cellular proteinSide 2.. In terms of biological role, part of the Sec protein translocase complex. Interacts with the SecYEG preprotein conducting channel. Has a central role in coupling the hydrolysis of ATP to the transfer of proteins into and across the cell membrane, serving as an ATP-driven molecular motor driving the stepwise translocation of polypeptide chains across the membrane. The polypeptide is Protein translocase subunit SecA (Halothermothrix orenii (strain H 168 / OCM 544 / DSM 9562)).